Consider the following 86-residue polypeptide: Protein P17 (86 aa).

The disordered stretch occupies residues 63 to 86 (SPAEKPDNQPELTGITFEGDNNDQ).

In terms of assembly, homotetramer.

In terms of biological role, assembly protein that acts late in phage assembly, after capsid protein folding and multimerization, and sorting of membrane proteins has occurred. The major coat protein P3 and two assembly factors (P10 and P17) are needed during the assembly of the virus particle inside the host cell, when the capsid protein multimers are capable of enclosing the host-derived membrane, containing the virus-encoded membrane-associated proteins. This Enterobacteria phage PRD1 (Bacteriophage PRD1) protein is Protein P17 (XVII).